The chain runs to 232 residues: Ribonuclease 3 (232 aa).

One can recognise an RNase III domain in the interval 5 to 134 (KKALLEQFDL…FLGALLLDKG (130 aa)). Glu47 serves as a coordination point for Mg(2+). Residue Asp51 is part of the active site. Mg(2+) is bound by residues Asp120 and Glu123. Glu123 is an active-site residue. Positions 160–229 (DYKTKLQELL…AKNAFEKESS (70 aa)) constitute a DRBM domain. The interval 203–232 (KSGQGQGRSKKLAEQEAAKNAFEKESSSCF) is disordered. Over residues 213–232 (KLAEQEAAKNAFEKESSSCF) the composition is skewed to basic and acidic residues.

It belongs to the ribonuclease III family. As to quaternary structure, homodimer. Requires Mg(2+) as cofactor.

The protein localises to the cytoplasm. The enzyme catalyses Endonucleolytic cleavage to 5'-phosphomonoester.. Digests double-stranded RNA. Involved in the processing of primary rRNA transcript to yield the immediate precursors to the large and small rRNAs (23S and 16S). Processes some mRNAs, and tRNAs when they are encoded in the rRNA operon. Processes pre-crRNA and tracrRNA of type II CRISPR loci if present in the organism. The polypeptide is Ribonuclease 3 (Streptococcus sanguinis (strain SK36)).